The chain runs to 138 residues: MAALPDKEKLLRNFTRCANWEEKYLYIIELGQRLAELNPQDRNPQNTIHGCQSQVWIVMRRNANGIIELQGDSDAAIVKGLMAVVFILYHQMTAQDIVHFDVRPWFEKMALAQHLTPSRSQGLEAMIRAIRAKAATLS.

The active-site Cysteine persulfide intermediate is the cysteine 51.

This sequence belongs to the SufE family. In terms of assembly, homodimer. Interacts with SufS.

The protein resides in the cytoplasm. It participates in cofactor biosynthesis; iron-sulfur cluster biosynthesis. In terms of biological role, participates in cysteine desulfuration mediated by SufS. Cysteine desulfuration mobilizes sulfur from L-cysteine to yield L-alanine and constitutes an essential step in sulfur metabolism for biosynthesis of a variety of sulfur-containing biomolecules. Functions as a sulfur acceptor for SufS, by mediating the direct transfer of the sulfur atom from the S-sulfanylcysteine of SufS, an intermediate product of cysteine desulfuration process. The protein is Cysteine desulfuration protein SufE of Salmonella dublin (strain CT_02021853).